The following is a 157-amino-acid chain: Large ribosomal subunit protein uL3 (157 aa).

The interval 57-98 (GKGFAGSIKRHNQSRGPESHGSRYHRRPGSMGPIKGKLKGKK) is disordered.

The protein belongs to the universal ribosomal protein uL3 family. As to quaternary structure, part of the 50S ribosomal subunit. Forms a cluster with proteins L14 and L19.

Functionally, one of the primary rRNA binding proteins, it binds directly near the 3'-end of the 23S rRNA, where it nucleates assembly of the 50S subunit. The protein is Large ribosomal subunit protein uL3 (rplC) of Onion yellows phytoplasma (strain OY-M).